A 321-amino-acid chain; its full sequence is Annexin A5 (321 aa).

Annexin repeat units follow at residues 15 to 86 (FDAR…SLMR), 87 to 158 (PARI…VLLQ), 170 to 242 (ALVE…AVVK), and 246 to 317 (SVPA…LLCG).

The protein belongs to the annexin family.

Its function is as follows. Collagen-binding protein. This Gallus gallus (Chicken) protein is Annexin A5 (ANXA5).